Reading from the N-terminus, the 150-residue chain is Ribosome maturation factor RimP (150 aa).

Belongs to the RimP family.

The protein resides in the cytoplasm. Its function is as follows. Required for maturation of 30S ribosomal subunits. The sequence is that of Ribosome maturation factor RimP from Thermotoga maritima (strain ATCC 43589 / DSM 3109 / JCM 10099 / NBRC 100826 / MSB8).